The sequence spans 3912 residues: Ubiquitin carboxyl-terminal hydrolase puf (3912 aa).

Disordered stretches follow at residues 101–172 (AQQQ…HKSH), 518–590 (NVTA…ISPE), 660–688 (DVPS…ECSD), 851–878 (VVSG…VQPS), and 1491–1611 (SRRG…PALS). The segment covering 106 to 133 (EQQRDEASAQAEAKESSAPAEEPKKEEP) has biased composition (basic and acidic residues). The segment covering 134–143 (SGSAGEEAQG) has biased composition (low complexity). Residues 150–164 (KKPPVGPCTPPPPQT) are compositionally biased toward pro residues. Low complexity predominate over residues 522–532 (SSSDSGSIEGS). Over residues 576 to 585 (ICDPTTEKGK) the composition is skewed to basic and acidic residues. Acidic residues predominate over residues 660 to 687 (DVPSSDEADGEADGDGEGELLADSDECS). Polar residues predominate over residues 862 to 876 (KASQGSSTSGSTPVQ). A compositionally biased stretch (basic residues) spans 1511–1520 (VKKSSMGRRR). Residues 1550 to 1567 (TPSTGLQDVETEASSSSG) are compositionally biased toward polar residues. Basic and acidic residues predominate over residues 1583–1594 (KGETFEQEKERP). Residues 1600–1609 (PPSPTPPPPA) show a composition bias toward pro residues. Residues 2015-2380 (VGLTNLGATC…SAYMLFYERR (366 aa)) enclose the USP domain. Cys2024 functions as the Nucleophile in the catalytic mechanism. Residues 2249 to 2263 (YKEERERRQKEKEGA) show a composition bias toward basic and acidic residues. The tract at residues 2249 to 2274 (YKEERERRQKEKEGADGSGDGNDNEK) is disordered. His2305 (proton acceptor) is an active-site residue. Disordered regions lie at residues 2391–2529 (ELLV…TSKA), 3322–3344 (QQSQ…LQQQ), 3657–3776 (SERF…EERE), and 3800–3912 (ASVP…PTQI). 2 stretches are compositionally biased toward basic and acidic residues: residues 2402-2413 (VEEKSEAEEPTK) and 2433-2488 (EKDK…EKPT). The span at 2504–2523 (NCDNHQQNNNSNSKASNDQQ) shows a compositional bias: low complexity. The span at 3657-3703 (SERFRKESERDPFPNKKQKRDSQKIKEKEHPQPESEKETSTENDKPS) shows a compositional bias: basic and acidic residues. A compositionally biased stretch (polar residues) spans 3706-3721 (SMESSGNAEQATDSTK). A compositionally biased stretch (acidic residues) spans 3741-3751 (SDDETELEDEL). A compositionally biased stretch (basic and acidic residues) spans 3766-3776 (TAQDRVNEERE). Polar residues predominate over residues 3865–3877 (PKTSQTNGSQQNE). The span at 3878 to 3912 (SPPAATSADTAPANPSPAPAAAVASTSQAASPTQI) shows a compositional bias: low complexity.

This sequence belongs to the peptidase C19 family. In terms of assembly, interacts with Myc and ago.

It localises to the nucleus. It catalyses the reaction Thiol-dependent hydrolysis of ester, thioester, amide, peptide and isopeptide bonds formed by the C-terminal Gly of ubiquitin (a 76-residue protein attached to proteins as an intracellular targeting signal).. Functionally, ubiquitin hydrolase that can remove conjugated ubiquitin from target proteins and polyubiquitin chains. Essential for Myc-mediated cell growth and proliferation in developing eyes and wings. In the wing and eye, the deubiquitinating activity acts as an antagonist to the SCF E3 ubiquitin-protein ligase member archipelago (ago) to regulate Myc and CycE stability and thus control cell growth and proliferation. Also appears to regulate ago by modulating its induction by Myc. May also promote cell apoptosis in the wing imaginal disk, acting in an apoptotic pathway that appears to be largely independent of Myc. Required for preventing the activation of the immune deficiency (Imd) and Toll signaling cascades under unchallenged conditions. Also appears to be involved in modulating the differential expression of certain antimicrobial peptides (AMP) in response to infection by either Gram-positive or Gram-negative bacteria. Involved in the regulation of DNA damage repair pathways, including euchromatic site-specific double strand break (DSB) repair. This is Ubiquitin carboxyl-terminal hydrolase puf from Drosophila melanogaster (Fruit fly).